Consider the following 161-residue polypeptide: Small ribosomal subunit protein uS19 (161 aa).

Residues 1–19 (MARQKKYSGKGGARKKNKQ) are compositionally biased toward basic residues. The segment at 1-26 (MARQKKYSGKGGARKKNKQKQNVAPR) is disordered.

Belongs to the universal ribosomal protein uS19 family.

In terms of biological role, protein S19 forms a complex with S13 that binds strongly to the 16S ribosomal RNA. The sequence is that of Small ribosomal subunit protein uS19 from Methanococcus maripaludis (strain DSM 14266 / JCM 13030 / NBRC 101832 / S2 / LL).